The following is a 352-amino-acid chain: S-adenosylmethionine:tRNA ribosyltransferase-isomerase (352 aa).

The protein belongs to the QueA family. As to quaternary structure, monomer.

It localises to the cytoplasm. The enzyme catalyses 7-aminomethyl-7-carbaguanosine(34) in tRNA + S-adenosyl-L-methionine = epoxyqueuosine(34) in tRNA + adenine + L-methionine + 2 H(+). It participates in tRNA modification; tRNA-queuosine biosynthesis. Transfers and isomerizes the ribose moiety from AdoMet to the 7-aminomethyl group of 7-deazaguanine (preQ1-tRNA) to give epoxyqueuosine (oQ-tRNA). This is S-adenosylmethionine:tRNA ribosyltransferase-isomerase from Cupriavidus necator (strain ATCC 17699 / DSM 428 / KCTC 22496 / NCIMB 10442 / H16 / Stanier 337) (Ralstonia eutropha).